The following is a 447-amino-acid chain: MNSYQTNTATSWGRNHIPTLLDNLTTAAMFMFCPFIILVFYLITYGEYLGSIGDFYLDIINGDWQTIWSNIPSFKINVLGACLLWIVFQLILSKLPDTIHRFVPHYVGGIKAGHITPAGNLVYYNINGLQAFIITHVLVIMSCYYGLFSPTIIMDNWGSIFWSVNIIGYLITFLAYFKALTFSSHPSDNKFTGKLFYDIVMGIEFNPEIFGTDLKLFFNGRPGIIAWNLINLSCAMKQYENFGYVSNSMILVIILQLIYIVDFFYNENWYVHTVDIAHDHFGWMLAWGDTVWLPFGYTLQAGYLMNNPIDLSTGFFNLVFVMGIIGYIIFRTANYQKDKYRSNTQGVKYIPCTYQTADGLNRASKLIYSGLWGVSRHMNYTGDIILSTAYCLACGFSHFIPYFYCVYMTILLVTRCLRDEQRCSRKYGKYWKMYTKRVPYRFIPGIY.

Transmembrane regions (helical) follow at residues 24 to 44 (LTTA…YLIT), 71 to 91 (IPSF…FQLI), 102 to 124 (FVPH…LVYY), 133 to 153 (IITH…PTII), 157 to 177 (WGSI…LAYF), 244 to 264 (YVSN…VDFF), 281 to 301 (FGWM…TLQA), and 309 to 329 (IDLS…GYII). NADP(+) is bound by residues Lys-337, Arg-341, Ile-367, Trp-372, and 379–380 (NY). Residues 393–413 (ACGFSHFIPYFYCVYMTILLV) traverse the membrane as a helical segment. NADP(+)-binding positions include Asp-419, 423–427 (CSRKY), and Tyr-434.

The protein belongs to the ERG4/ERG24 family.

Its subcellular location is the membrane. It catalyses the reaction cholesterol + NADP(+) = 7-dehydrocholesterol + NADPH + H(+). It functions in the pathway steroid biosynthesis; cholesterol biosynthesis. Catalyzes the last step of the cholesterol synthesis pathway, which transforms cholesta-5,7-dien-3beta-ol (7-dehydrocholesterol,7-DHC) into cholesterol by reducing the C7-C8 double bond of its sterol core. The protein is Probable 7-dehydrocholesterol reductase (DHCR7) of Acanthamoeba polyphaga (Amoeba).